The sequence spans 200 residues: Mediator of RNA polymerase II transcription subunit 22 (200 aa).

A coiled-coil region spans residues Ser-93–Glu-122. The tract at residues Leu-166–Ala-200 is disordered.

The protein belongs to the Mediator complex subunit 22 family. Component of the Mediator complex, which is composed of MED1, MED4, MED6, MED7, MED8, MED9, MED10, MED11, MED12, MED13, MED13L, MED14, MED15, MED16, MED17, MED18, MED19, MED20, MED21, MED22, MED23, MED24, MED25, MED26, MED27, MED29, MED30, MED31, CCNC, CDK8 and CDC2L6/CDK11. The MED12, MED13, CCNC and CDK8 subunits form a distinct module termed the CDK8 module. Mediator containing the CDK8 module is less active than Mediator lacking this module in supporting transcriptional activation. Individual preparations of the Mediator complex lacking one or more distinct subunits have been variously termed ARC, CRSP, DRIP, PC2, SMCC and TRAP.

It localises to the nucleus. In terms of biological role, component of the Mediator complex, a coactivator involved in the regulated transcription of nearly all RNA polymerase II-dependent genes. Mediator functions as a bridge to convey information from gene-specific regulatory proteins to the basal RNA polymerase II transcription machinery. Mediator is recruited to promoters by direct interactions with regulatory proteins and serves as a scaffold for the assembly of a functional preinitiation complex with RNA polymerase II and the general transcription factors. The protein is Mediator of RNA polymerase II transcription subunit 22 (MED22) of Homo sapiens (Human).